The chain runs to 70 residues: uncharacterized protein (70 aa).

The chain crosses the membrane as a helical span at residues 4–24 (VKTIAMLAMLVIVAALIYMGY).

The protein resides in the host membrane. This is an uncharacterized protein from Dryophytes versicolor (chameleon treefrog).